The chain runs to 363 residues: Large ribosomal subunit protein uL4 (363 aa).

This sequence belongs to the universal ribosomal protein uL4 family. As to quaternary structure, component of the large ribosomal subunit. Mature ribosomes consist of a small (40S) and a large (60S) subunit. The 40S subunit contains about 32 different proteins and 1 molecule of RNA (18S). The 60S subunit contains 45 different proteins and 3 molecules of RNA (25S, 5.8S and 5S).

The protein resides in the cytoplasm. Component of the ribosome, a large ribonucleoprotein complex responsible for the synthesis of proteins in the cell. The small ribosomal subunit (SSU) binds messenger RNAs (mRNAs) and translates the encoded message by selecting cognate aminoacyl-transfer RNA (tRNA) molecules. The large subunit (LSU) contains the ribosomal catalytic site termed the peptidyl transferase center (PTC), which catalyzes the formation of peptide bonds, thereby polymerizing the amino acids delivered by tRNAs into a polypeptide chain. The nascent polypeptides leave the ribosome through a tunnel in the LSU and interact with protein factors that function in enzymatic processing, targeting, and the membrane insertion of nascent chains at the exit of the ribosomal tunnel. In Candida albicans (strain SC5314 / ATCC MYA-2876) (Yeast), this protein is Large ribosomal subunit protein uL4.